The chain runs to 277 residues: 3-methyl-2-oxobutanoate hydroxymethyltransferase (277 aa).

Aspartate 53 and aspartate 96 together coordinate Mg(2+). Residues 53–54 (DS), aspartate 96, and lysine 126 contribute to the 3-methyl-2-oxobutanoate site. A Mg(2+)-binding site is contributed by glutamate 128. Residue glutamate 195 is the Proton acceptor of the active site.

This sequence belongs to the PanB family. As to quaternary structure, homodecamer; pentamer of dimers. It depends on Mg(2+) as a cofactor.

It is found in the cytoplasm. It catalyses the reaction 3-methyl-2-oxobutanoate + (6R)-5,10-methylene-5,6,7,8-tetrahydrofolate + H2O = 2-dehydropantoate + (6S)-5,6,7,8-tetrahydrofolate. Its pathway is cofactor biosynthesis; (R)-pantothenate biosynthesis; (R)-pantoate from 3-methyl-2-oxobutanoate: step 1/2. In terms of biological role, catalyzes the reversible reaction in which hydroxymethyl group from 5,10-methylenetetrahydrofolate is transferred onto alpha-ketoisovalerate to form ketopantoate. The sequence is that of 3-methyl-2-oxobutanoate hydroxymethyltransferase from Pelodictyon phaeoclathratiforme (strain DSM 5477 / BU-1).